Consider the following 325-residue polypeptide: MANALASATCERCKGGFAPAEKIVNSNGELYHEQCFVCAQCFQQFPEGLFYEFEGRKYCEHDFQMLFAPCCHQCGEFIIGRVIKAMNNSWHPECFRCDLCQEVLADIGFVKNAGRHLCRPCHNREKARGLGKYICQKCHAIIDEQPLIFKNDPYHPDHFNCANCGKELTADARELKGELYCLPCHDKMGVPICGACRRPIEGRVVNAMGKQWHVEHFVCAKCEKPFLGHRHYERKGLAYCETHYNQLFGDVCFHCNRVIEGDVVSALNKAWCVNCFACSTCNTKLTLKNKFVEFDMKPVCKKCYEKFPLELKKRLKKLAETLGRK.

Alanine 2 carries the N-acetylalanine modification. LIM zinc-binding domains follow at residues 10-62 (CERC…CEHD), 71-121 (CHQC…CRPC), 135-184 (CQKC…CLPC), 193-243 (CGAC…CETH), and 252-303 (CFHC…CKKC).

As to quaternary structure, component of the heterotrimeric IPP (ILK-PINCH-PARVIN) complex composed of ILK, LIMS1/PINCH and PARVA; the complex binds to F-actin via the C-terminal tail of LIMS1 and the N-terminal region of PARVA, promoting F-actin filament bundling. Formation of the IPP complex is dependent on protein kinase C and precedes integrin-mediated cell adhesion and spreading. Competes with LIMS2 for interaction with ILK. Interacts (via LIM zinc-binding 5) with TGFB1I1. Interacts with SH3/SH2 adapter NCK2, thereby linking the complex to cell surface receptors. Expressed in most tissues except in the brain.

The protein localises to the cell junction. It localises to the focal adhesion. Its subcellular location is the cell membrane. In terms of biological role, within the IPP (ILK-PINCH-PARVIN) complex, binds to F-actin, promoting F-actin bundling, a process required to generate force for actin cytoskeleton reorganization and subsequent dynamic cell adhesion events such as cell spreading and migration. This chain is LIM and senescent cell antigen-like-containing domain protein 1 (LIMS1), found in Homo sapiens (Human).